Consider the following 512-residue polypeptide: Solute carrier family 2, facilitated glucose transporter member 7 (512 aa).

At 1 to 21 the chain is on the cytoplasmic side; the sequence is MENKEAGTPPPIPSREGRLQP. Residues 22–42 traverse the membrane as a helical segment; that stretch reads TLLLATLSAAFGSAFQYGYNL. The Extracellular portion of the chain corresponds to 43-78; that stretch reads SVVNTPHKVFKSFYNETYFERHATFMDGKLMLLLWS. N57 carries N-linked (GlcNAc...) asparagine glycosylation. A helical transmembrane segment spans residues 79-99; it reads CTVSMFPLGGLLGSLLVGLLV. Over 100 to 107 the chain is Cytoplasmic; sequence DSCGRKGT. The chain crosses the membrane as a helical span at residues 108 to 128; the sequence is LLINNIFAIIPAILMGVSKVA. Residues 129–138 are Extracellular-facing; the sequence is KAFELIVFSR. A helical transmembrane segment spans residues 139 to 159; it reads VVLGVCAGISYSALPMYLGEL. The Cytoplasmic portion of the chain corresponds to 160-172; it reads APKNLRGMVGTMT. The helical transmembrane segment at 173 to 193 threads the bilayer; that stretch reads EVFVIVGVFLAQIFSLQAILG. Residues 194–198 are Extracellular-facing; the sequence is NPAGW. A helical transmembrane segment spans residues 199 to 219; sequence PVLLALTGVPALLQLLTLPFF. Over 220–281 the chain is Cytoplasmic; that stretch reads PESPRYSLIQ…LHLCALRSLR (62 aa). Residues 282–302 form a helical membrane-spanning segment; sequence WQLLSIIVLMAGQQLSGINAI. Residues 294–295 and N300 each bind D-glucose; that span reads QQ. At 303–321 the chain is on the extracellular side; the sequence is NYYADTIYTSAGVEAAHSQ. The helical transmembrane segment at 322 to 342 threads the bilayer; sequence YVTVGSGVVNIVMTITSAVLV. N331 provides a ligand contact to D-glucose. Over 343–350 the chain is Cytoplasmic; the sequence is ERLGRRHL. The chain crosses the membrane as a helical span at residues 351 to 371; that stretch reads LLAGYGICGSACLVLTVVLLF. The Extracellular portion of the chain corresponds to 372–379; sequence QNRVPELS. Residues 380–400 form a helical membrane-spanning segment; the sequence is YLGIICVFAYIAGHSIGPSPV. At 401–415 the chain is on the cytoplasmic side; that stretch reads PSVVRTEIFLQSSRR. Residues 416–436 traverse the membrane as a helical segment; it reads AAFMVDGAVHWLTNFIIGFLF. The Extracellular portion of the chain corresponds to 437–445; sequence PSIQEAIGA. The helical transmembrane segment at 446 to 466 threads the bilayer; the sequence is YSFIIFAGICLLTAIYIYVVI. At 467 to 512 the chain is on the cytoplasmic side; that stretch reads PETKGKTFVEINRIFAKRNRVKLPEEKEETIDAGPPTASPAKETSF. A disordered region spans residues 491–512; the sequence is EEKEETIDAGPPTASPAKETSF.

Belongs to the major facilitator superfamily. Sugar transporter (TC 2.A.1.1) family. Glucose transporter subfamily. Expressed in small intestine and colon. Weakly expressed in testis and prostate.

The protein resides in the cell membrane. Its subcellular location is the apical cell membrane. The catalysed reaction is D-glucose(out) = D-glucose(in). The enzyme catalyses D-fructose(out) = D-fructose(in). With respect to regulation, glucose and fructose transport are inhibited by the flavonoid apigenin. Its function is as follows. Probable sugar transporter. Even if its physiological substrate is subject to discussion, it is able to transport glucose and fructose. Does not transport galactose, 2-deoxy-d-glucose and xylose. This is Solute carrier family 2, facilitated glucose transporter member 7 from Homo sapiens (Human).